Reading from the N-terminus, the 452-residue chain is 5'-nucleotidase domain-containing protein 1 (452 aa).

Residue Asp16 is the Nucleophile of the active site. Positions 16 and 18 each coordinate Mg(2+). The active-site Proton donor is Asp18. Lys171 is subject to N6-acetyllysine. Asp313 serves as a coordination point for Mg(2+). Basic and acidic residues predominate over residues 339–361 (GDKDGKPEESEPEEKKGKYEGSK). The interval 339-365 (GDKDGKPEESEPEEKKGKYEGSKAKPL) is disordered.

It belongs to the 5'(3')-deoxyribonucleotidase family.

The protein is 5'-nucleotidase domain-containing protein 1 (NT5DC1) of Bos taurus (Bovine).